The sequence spans 926 residues: Rap guanine nucleotide exchange factor 3 (926 aa).

S79 carries the phosphoserine modification. The 77-residue stretch at 110–186 folds into the DEP domain; that stretch reads ATYPTLIRDR…RDAQFYRFPG (77 aa). An interaction with PDE3B region spans residues 218–242; the sequence is TVALRKSPGQRTDEELDLIFEELVH. 3',5'-cyclic AMP-binding positions include 311 to 314 and 321 to 322; these read GQLA and RA. Residues 369-388 form a disordered region; sequence TSQGAGPSRPPTPGRNRYTV. The N-terminal Ras-GEF domain maps to 384 to 521; it reads NRYTVMSGTP…EQYPERRRHH (138 aa). The tract at residues 398-422 is interaction with PDE3B; it reads ELLLEAMRPDSSAHDPTETFLSDFL. Phosphoserine is present on residues S531 and S867. The 228-residue stretch at 665-892 folds into the Ras-GEF domain; sequence SAKDLAGQLT…SRISTCSEQS (228 aa).

Interacts with PDE3B and PIK3R6; form a signaling complex that regulates phosphatidylinositol 3-kinase gamma in angiogenesis. As to expression, expressed at low levels in adult brain. Strongly expressed in parts of the neonatal brain, including the septum and the thalamus.

It is found in the cytoplasm. Its subcellular location is the membrane. Functionally, guanine nucleotide exchange factor (GEF) for RAP1A and RAP2A small GTPases that is activated by binding cAMP. Through simultaneous binding of PDE3B to RAPGEF3 and PIK3R6 is assembled in a signaling complex in which it activates the PI3K gamma complex and which is involved in angiogenesis. Plays a role in the modulation of the cAMP-induced dynamic control of endothelial barrier function through a pathway that is independent on Rho-mediated signaling. Required for the actin rearrangement at cell-cell junctions, such as stress fibers and junctional actin. This is Rap guanine nucleotide exchange factor 3 (Rapgef3) from Rattus norvegicus (Rat).